Consider the following 285-residue polypeptide: Shikimate dehydrogenase (NADP(+)) (285 aa).

Residues 20–22 (SRS) and threonine 67 contribute to the shikimate site. The Proton acceptor role is filled by lysine 71. Asparagine 93 and aspartate 108 together coordinate shikimate. NADP(+)-binding positions include 132–136 (GAGGA) and methionine 224. Tyrosine 226 provides a ligand contact to shikimate. Glycine 248 contributes to the NADP(+) binding site.

This sequence belongs to the shikimate dehydrogenase family. As to quaternary structure, homodimer.

It carries out the reaction shikimate + NADP(+) = 3-dehydroshikimate + NADPH + H(+). It functions in the pathway metabolic intermediate biosynthesis; chorismate biosynthesis; chorismate from D-erythrose 4-phosphate and phosphoenolpyruvate: step 4/7. Functionally, involved in the biosynthesis of the chorismate, which leads to the biosynthesis of aromatic amino acids. Catalyzes the reversible NADPH linked reduction of 3-dehydroshikimate (DHSA) to yield shikimate (SA). The sequence is that of Shikimate dehydrogenase (NADP(+)) from Bordetella avium (strain 197N).